The sequence spans 156 residues: uncharacterized protein (156 aa).

2 helical membrane passes run 46-66 and 114-134; these read GLVL…AGVV and IIDI…IVAL.

The protein localises to the cell membrane. This is an uncharacterized protein from Haemophilus influenzae (strain ATCC 51907 / DSM 11121 / KW20 / Rd).